A 1249-amino-acid polypeptide reads, in one-letter code: Cell adhesion molecule-related/down-regulated by oncogenes (1249 aa).

Positions 1-25 are cleaved as a signal peptide; sequence MHSDPGPWHPLLCFLVLALSTSANS. Residues 26–957 are Extracellular-facing; it reads DVTPRFTSKP…PSHSPTRNGD (932 aa). Ig-like C2-type domains are found at residues 29-113, 120-212, 217-307, 314-400, and 406-517; these read PRFT…KSVS, NDFE…LKLS, PRVD…VYYT, PSVS…ATVH, and PVIV…AYLT. Cystine bridges form between cysteine 50/cysteine 98, cysteine 142/cysteine 192, and cysteine 244/cysteine 292. Residues asparagine 181, asparagine 289, asparagine 296, asparagine 344, and asparagine 428 are each glycosylated (N-linked (GlcNAc...) asparagine). Disulfide bonds link cysteine 335-cysteine 382 and cysteine 427-cysteine 501. Disordered regions lie at residues 528 to 585 and 671 to 690; these read EDIT…SPPQ and TSKERTSSSKNTQAPFPPIG. The span at 545 to 566 shows a compositional bias: basic and acidic residues; it reads SETRVPDHSQINEHKPEPRVTE. 3 consecutive Fibronectin type-III domains span residues 577 to 675, 721 to 815, and 826 to 923; these read APII…SKER, APDR…VAGY, and GPRI…TKAR. Asparagine 870 carries N-linked (GlcNAc...) asparagine glycosylation. The tract at residues 929–952 is disordered; the sequence is SEYPVLDLSTPSVPDRSSSPSHSP. The span at 937–952 shows a compositional bias: low complexity; the sequence is STPSVPDRSSSPSHSP. The helical transmembrane segment at 958 to 978 threads the bilayer; the sequence is FLYVIVGCVLGGMVLILLAFI. The Cytoplasmic portion of the chain corresponds to 979-1249; the sequence is AMCLLKNRQQ…DHPQLQTQEA (271 aa). Positions 1158–1202 are disordered; that stretch reads NCSEEIEEDQNEKETQLSANSVCPEEATQTGTEQHEGEDCTKTED. Acidic residues predominate over residues 1159 to 1168; the sequence is CSEEIEEDQN. Positions 1173 to 1189 are enriched in polar residues; sequence QLSANSVCPEEATQTGT. The segment covering 1190–1202 has biased composition (basic and acidic residues); sequence EQHEGEDCTKTED.

It is found in the cell membrane. Functionally, component of a cell-surface receptor complex that mediates cell-cell interactions between muscle precursor cells. Promotes differentiation of myogenic cells. This is Cell adhesion molecule-related/down-regulated by oncogenes (cdon) from Xenopus laevis (African clawed frog).